Reading from the N-terminus, the 409-residue chain is Protein ROOT PRIMORDIUM DEFECTIVE 1 (409 aa).

Residues 47 to 386 (VRDHGYDNYM…RLAELVLMSP (340 aa)) form the PORR domain.

In terms of tissue distribution, expressed in roots, hypocotyls, cotyledons and shoot apex.

Involved in pre-arranging the maintenance of the active cell proliferation during root primordium development. Does not seem to be involved in cell cycle progression. The sequence is that of Protein ROOT PRIMORDIUM DEFECTIVE 1 (RPD1) from Arabidopsis thaliana (Mouse-ear cress).